Here is a 403-residue protein sequence, read N- to C-terminus: Acetate kinase (403 aa).

Asn7 contributes to the Mg(2+) binding site. Lys14 serves as a coordination point for ATP. Arg97 is a binding site for substrate. Asp154 acts as the Proton donor/acceptor in catalysis. ATP-binding positions include 213 to 217 (HLGNG), 287 to 289 (DMR), and 335 to 339 (GIGEN). Glu388 is a Mg(2+) binding site.

The protein belongs to the acetokinase family. In terms of assembly, homodimer. The cofactor is Mg(2+). It depends on Mn(2+) as a cofactor.

Its subcellular location is the cytoplasm. It carries out the reaction acetate + ATP = acetyl phosphate + ADP. The protein operates within metabolic intermediate biosynthesis; acetyl-CoA biosynthesis; acetyl-CoA from acetate: step 1/2. Catalyzes the formation of acetyl phosphate from acetate and ATP. Can also catalyze the reverse reaction. This is Acetate kinase from Synechococcus sp. (strain JA-2-3B'a(2-13)) (Cyanobacteria bacterium Yellowstone B-Prime).